A 458-amino-acid chain; its full sequence is D-inositol 3-phosphate glycosyltransferase (458 aa).

Position 16 (His-16) interacts with 1D-myo-inositol 3-phosphate. Residues 22-23 (QP) and Gly-30 contribute to the UDP-N-acetyl-alpha-D-glucosamine site. 1D-myo-inositol 3-phosphate-binding positions include 27–32 (DAGGMN), Lys-85, Tyr-118, Thr-142, and Arg-162. Residues Arg-236, Lys-241, and Gln-302 each coordinate UDP-N-acetyl-alpha-D-glucosamine. The Mg(2+) site is built by Tyr-311, Arg-312, and Ser-314. UDP-N-acetyl-alpha-D-glucosamine contacts are provided by Glu-324 and Glu-332. Thr-338 contacts Mg(2+). Residues 428 to 458 (VAAQNVTGSSSRTRRPWRRRRSTLLPMTGRS) form a disordered region. Residues 439–449 (RTRRPWRRRRS) show a composition bias toward basic residues.

It belongs to the glycosyltransferase group 1 family. MshA subfamily. As to quaternary structure, homodimer.

It catalyses the reaction 1D-myo-inositol 3-phosphate + UDP-N-acetyl-alpha-D-glucosamine = 1D-myo-inositol 2-acetamido-2-deoxy-alpha-D-glucopyranoside 3-phosphate + UDP + H(+). Catalyzes the transfer of a N-acetyl-glucosamine moiety to 1D-myo-inositol 3-phosphate to produce 1D-myo-inositol 2-acetamido-2-deoxy-glucopyranoside 3-phosphate in the mycothiol biosynthesis pathway. The protein is D-inositol 3-phosphate glycosyltransferase of Gordonia bronchialis (strain ATCC 25592 / DSM 43247 / BCRC 13721 / JCM 3198 / KCTC 3076 / NBRC 16047 / NCTC 10667) (Rhodococcus bronchialis).